Reading from the N-terminus, the 320-residue chain is ATP-dependent 6-phosphofructokinase (320 aa).

ATP is bound at residue Gly12. Residues 22 to 26 (RGVVR) and 55 to 60 (RYSVSD) contribute to the ADP site. ATP-binding positions include 73–74 (RF) and 103–106 (GDGS). Position 104 (Asp104) interacts with Mg(2+). Residue 126–128 (TID) participates in substrate binding. The active-site Proton acceptor is Asp128. An ADP-binding site is contributed by Arg155. Substrate is bound by residues Arg163 and 170–172 (MGR). Residues 186–188 (GCE), Lys212, and 214–216 (KKH) contribute to the ADP site. Substrate-binding positions include Glu223, Arg244, and 250 to 253 (HIQR).

Belongs to the phosphofructokinase type A (PFKA) family. ATP-dependent PFK group I subfamily. Prokaryotic clade 'B1' sub-subfamily. As to quaternary structure, homotetramer. Mg(2+) is required as a cofactor.

Its subcellular location is the cytoplasm. It carries out the reaction beta-D-fructose 6-phosphate + ATP = beta-D-fructose 1,6-bisphosphate + ADP + H(+). The protein operates within carbohydrate degradation; glycolysis; D-glyceraldehyde 3-phosphate and glycerone phosphate from D-glucose: step 3/4. With respect to regulation, allosterically activated by ADP and other diphosphonucleosides, and allosterically inhibited by phosphoenolpyruvate. In terms of biological role, catalyzes the phosphorylation of D-fructose 6-phosphate to fructose 1,6-bisphosphate by ATP, the first committing step of glycolysis. The protein is ATP-dependent 6-phosphofructokinase of Pectobacterium carotovorum subsp. carotovorum (strain PC1).